A 448-amino-acid chain; its full sequence is Exodeoxyribonuclease 7 large subunit (448 aa).

Belongs to the XseA family. In terms of assembly, heterooligomer composed of large and small subunits.

It localises to the cytoplasm. The catalysed reaction is Exonucleolytic cleavage in either 5'- to 3'- or 3'- to 5'-direction to yield nucleoside 5'-phosphates.. Bidirectionally degrades single-stranded DNA into large acid-insoluble oligonucleotides, which are then degraded further into small acid-soluble oligonucleotides. The sequence is that of Exodeoxyribonuclease 7 large subunit from Shewanella sp. (strain MR-4).